A 337-amino-acid chain; its full sequence is 5-formaminoimidazole-4-carboxamide-1-(beta)-D-ribofuranosyl 5'-monophosphate synthetase (337 aa).

5-amino-1-(5-phospho-beta-D-ribosyl)imidazole-4-carboxamide-binding residues include histidine 9 and serine 73. An ATP-grasp domain is found at 94 to 324 (KKIFEWEADQ…IGRRIAREIR (231 aa)). ATP is bound by residues 124–184 (PEDV…VPMY) and glutamate 206. Asparagine 234 serves as a coordination point for 5-amino-1-(5-phospho-beta-D-ribosyl)imidazole-4-carboxamide. The Mg(2+) site is built by glutamate 273 and glutamate 286.

This sequence belongs to the phosphohexose mutase family. The cofactor is Mg(2+). Mn(2+) serves as cofactor.

The catalysed reaction is 5-amino-1-(5-phospho-beta-D-ribosyl)imidazole-4-carboxamide + formate + ATP = 5-formamido-1-(5-phospho-D-ribosyl)imidazole-4-carboxamide + ADP + phosphate. The protein operates within purine metabolism; IMP biosynthesis via de novo pathway; 5-formamido-1-(5-phospho-D-ribosyl)imidazole-4-carboxamide from 5-amino-1-(5-phospho-D-ribosyl)imidazole-4-carboxamide (formate route): step 1/1. Functionally, catalyzes the ATP- and formate-dependent formylation of 5-aminoimidazole-4-carboxamide-1-beta-d-ribofuranosyl 5'-monophosphate (AICAR) to 5-formaminoimidazole-4-carboxamide-1-beta-d-ribofuranosyl 5'-monophosphate (FAICAR) in the absence of folates. This Saccharolobus solfataricus (strain ATCC 35092 / DSM 1617 / JCM 11322 / P2) (Sulfolobus solfataricus) protein is 5-formaminoimidazole-4-carboxamide-1-(beta)-D-ribofuranosyl 5'-monophosphate synthetase.